The primary structure comprises 84 residues: Defensin-like protein 37 (84 aa).

Residues 1–24 (MAVKLIYLFLFLYIALLISGRTMS) form the signal peptide. Intrachain disulfides connect C46/C67, C52/C79, and C56/C81.

The protein belongs to the DEFL family.

It is found in the secreted. This is Defensin-like protein 37 (EDA21) from Arabidopsis thaliana (Mouse-ear cress).